A 553-amino-acid chain; its full sequence is Transcriptional regulator HilA (553 aa).

The segment at residues 11–107 is a DNA-binding region (ompR/PhoB-type); it reads NKKFVFDDFI…LYGQGYRFNR (97 aa). Position 62 is a 4-aspartylphosphate (Asp-62). The TPR repeat unit spans residues 372–405; that stretch reads ADIKYYYGWNLFMAGQLEEALQTINECLKLDPTR.

The main transcriptional regulator of the Salmonella pathogenicity island 1 (SPI1) gene expression. Activates the expression of invasion genes by a direct action at their promoters and also indirectly by increasing the level of invF. Also binds upstream of prgH and directly activates the expression of prgHIJK operon. This is Transcriptional regulator HilA (hilA) from Salmonella paratyphi A (strain ATCC 9150 / SARB42).